Here is an 88-residue protein sequence, read N- to C-terminus: M-zodatoxin-Lt1a (88 aa).

The N-terminal stretch at 1-22 is a signal peptide; it reads MKYFVVALALAVALVCIAESTA. Positions 23 to 62 are excised as a propeptide; that stretch reads YDVNEELENELDDLSDAAWLAKAAEDLQALDDFEESEESR. The Processing quadruplet motif signature appears at 59–62; that stretch reads EESR.

In terms of processing, cleavage of the propeptide depends on the processing quadruplet motif (XXXR, with at least one of X being E). Expressed by the venom gland.

It localises to the secreted. Has antimicrobial activity against Gram-positive bacteria (A.globiformis VKM Ac-1112 (MIC=0.5 uM), and B.subtilis VKM B-501 (MIC=1.0 uM)), Gram-negative bacteria (E.coli DH5-alpha (MIC=1.0 uM), E.coli MH1 (MIC=0.7 uM), and P.aeruginosa PAO1 (MIC=4.1 uM)), and yeasts (P.pastoris GS115 (MIC=17 uM), and S.cerevisiae Y190 (MIC&gt;33 uM)). Has a moderate hemolytic activity against rabbit erythrocytes. Causes paralysis, but is not lethal when injected into insect (M.domestica) larvae. This is M-zodatoxin-Lt1a from Lachesana tarabaevi (Spider).